Consider the following 395-residue polypeptide: MSERKLFTSESVSEGHPDKIADQISDAILDAILAEDPEAHVAAETVVYTGSVHVFGEISTSAYVDINRVVRDTIAEIGYTNAEYGFSANSVGVHPSLVEQSTDIAQGVNEALEAREGQKDDLNLIGAGDQGLMFGFAIDETPELMPLPISLSHKLVKKLADLRKSGDITYLRPDAKSQVTVEYDDNDQPVRVDTVVISTQHDPEVSQETIRHDVIEKVIKEVIPTSFIDDNTKYFINPTGRFVIGGPQGDSGLTGRKIIVDTYGGYSRHGGGAFSGKDATKVDRSASYAARYIAKNIVAAGLAKKAEVQLAYAIGVAQPVSVRIDTFGTSTVSETDIEKAVRQLFDLRPAGIIKMLDLKRPIYKQTAAYGHMGRTDIDLPWEKLDKVEALKQLIG.

His16 serves as a coordination point for ATP. Residue Asp18 participates in Mg(2+) binding. Position 44 (Glu44) interacts with K(+). Residues Glu57 and Gln100 each contribute to the L-methionine site. Residues 100 to 110 (QSTDIAQGVNE) are flexible loop. ATP-binding positions include 174 to 176 (DAK), 241 to 242 (RF), Asp250, 256 to 257 (RK), Ala273, and Lys277. Asp250 contacts L-methionine. L-methionine is bound at residue Lys281.

Belongs to the AdoMet synthase family. Homotetramer; dimer of dimers. The cofactor is Mg(2+). It depends on K(+) as a cofactor.

It localises to the cytoplasm. It catalyses the reaction L-methionine + ATP + H2O = S-adenosyl-L-methionine + phosphate + diphosphate. It participates in amino-acid biosynthesis; S-adenosyl-L-methionine biosynthesis; S-adenosyl-L-methionine from L-methionine: step 1/1. Functionally, catalyzes the formation of S-adenosylmethionine (AdoMet) from methionine and ATP. The overall synthetic reaction is composed of two sequential steps, AdoMet formation and the subsequent tripolyphosphate hydrolysis which occurs prior to release of AdoMet from the enzyme. This Streptococcus uberis (strain ATCC BAA-854 / 0140J) protein is S-adenosylmethionine synthase.